A 274-amino-acid polypeptide reads, in one-letter code: 3-methyl-2-oxobutanoate hydroxymethyltransferase (274 aa).

Residues Asp-50 and Asp-89 each coordinate Mg(2+). 3-methyl-2-oxobutanoate-binding positions include 50-51, Asp-89, and Lys-119; that span reads DS. Mg(2+) is bound at residue Glu-121. Glu-188 functions as the Proton acceptor in the catalytic mechanism.

It belongs to the PanB family. In terms of assembly, homodecamer; pentamer of dimers. Requires Mg(2+) as cofactor.

Its subcellular location is the cytoplasm. The catalysed reaction is 3-methyl-2-oxobutanoate + (6R)-5,10-methylene-5,6,7,8-tetrahydrofolate + H2O = 2-dehydropantoate + (6S)-5,6,7,8-tetrahydrofolate. The protein operates within cofactor biosynthesis; (R)-pantothenate biosynthesis; (R)-pantoate from 3-methyl-2-oxobutanoate: step 1/2. In terms of biological role, catalyzes the reversible reaction in which hydroxymethyl group from 5,10-methylenetetrahydrofolate is transferred onto alpha-ketoisovalerate to form ketopantoate. This chain is 3-methyl-2-oxobutanoate hydroxymethyltransferase, found in Methylorubrum populi (strain ATCC BAA-705 / NCIMB 13946 / BJ001) (Methylobacterium populi).